The primary structure comprises 557 residues: Protein NRT1/ PTR FAMILY 5.10 (557 aa).

2 consecutive transmembrane segments (helical) span residues 49 to 67 (FAYY…GPLG) and 79 to 99 (AWSG…DSFL). A Phosphothreonine modification is found at Thr104. 10 consecutive transmembrane segments (helical) span residues 105–125 (ILAA…SAMI), 144–164 (VITF…HKPC), 186–206 (SFFN…LWVL), 215–235 (WALG…VLLL), 320–340 (APIW…PTFF), 365–385 (FISL…IPIA), 401–421 (IGTG…VEMK), 443–463 (VWWL…AMVG), 479–499 (VGLA…SFMI), and 526–546 (YFYW…LYVA).

It belongs to the major facilitator superfamily. Proton-dependent oligopeptide transporter (POT/PTR) (TC 2.A.17) family. Expressed in shoots, roots and stems. Detected in leaves, flowers and siliques.

Its subcellular location is the membrane. The protein is Protein NRT1/ PTR FAMILY 5.10 (NPF5.10) of Arabidopsis thaliana (Mouse-ear cress).